The primary structure comprises 617 residues: Sodium-dependent noradrenaline transporter (617 aa).

The disordered stretch occupies residues 1-23; it reads MLLARMNPQVQPENNGADTGPEQ. Topologically, residues 1–62 are cytoplasmic; it reads MLLARMNPQV…AQPRETWGKK (62 aa). Polar residues predominate over residues 8–17; it reads PQVQPENNGA. A helical membrane pass occupies residues 63–88; it reads IDFLLSVVGFAVDLANVWRFPYLCYK. 3 residues coordinate Na(+): glycine 71, alanine 73, and valine 74. Aspartate 75 is a binding site for (R)-noradrenaline. Aspartate 75 is a dopamine binding site. Residue asparagine 78 coordinates Na(+). (R)-noradrenaline is bound by residues tyrosine 87 and lysine 88. At 89-92 the chain is on the extracellular side; it reads NGGG. The chain crosses the membrane as a helical span at residues 93–116; sequence AFLIPYTLFLIIAGMPLFYMELAL. The Cytoplasmic portion of the chain corresponds to 117 to 135; the sequence is GQYNREGAATVWKICPFFK. Residues 136–166 traverse the membrane as a helical segment; it reads GVGYAVILIALYVGFYYNVIIAWSLYYLFSS. (R)-noradrenaline-binding residues include alanine 145 and glycine 149. Residue alanine 145 coordinates dopamine. Over 167 to 233 the chain is Extracellular; sequence FTLNLPWTDC…SSGIHDIGLP (67 aa). A disulfide bridge links cysteine 176 with cysteine 185. N-linked (GlcNAc...) asparagine glycosylation is found at asparagine 184, asparagine 192, and asparagine 198. A helical membrane pass occupies residues 234–254; that stretch reads QWQLLLCLMVVVIVLYFSLWK. Residues 255–257 lie on the Cytoplasmic side of the membrane; it reads GVK. Residues 258–282 traverse the membrane as a helical segment; the sequence is TSGKVVWITATLPYFVLFVLLVHGV. Residues 283 to 306 lie on the Extracellular side of the membrane; that stretch reads TLPGASNGINAYLHIDFYRLKEAT. A helical transmembrane segment spans residues 307 to 332; that stretch reads VWIDAATQIFFSLGAGFGVLIAFASY. Phenylalanine 317 provides a ligand contact to (R)-noradrenaline. Phenylalanine 317 provides a ligand contact to dopamine. Serine 318 lines the Na(+) pocket. Residues 333–338 are Cytoplasmic-facing; it reads NKFDNN. The chain crosses the membrane as a helical span at residues 339–362; the sequence is CYRDALLTSSINCITSFVSGFAIF. Asparagine 350 contributes to the Na(+) binding site. At 363–402 the chain is on the extracellular side; it reads SILGYMAHEHKVNIEDVATEGAGLVFILYPEAISTLSGST. Glutamate 382 is a (R)-noradrenaline binding site. Residue glutamate 382 coordinates dopamine. The chain crosses the membrane as a helical span at residues 403–428; the sequence is FWAVVFFVMLLALGLDSSMGGMEAVI. The Na(+) site is built by aspartate 418 and serine 419. Residues 429–443 lie on the Cytoplasmic side of the membrane; that stretch reads TGLADDFQVLKRHRK. A helical membrane pass occupies residues 444–464; it reads LFTFGVTFSTFLLALFCITKG. A topological domain (extracellular) is located at residue glycine 465. Residues 466 to 492 form a helical membrane-spanning segment; sequence IYVLTLLDTFAAGTSILFAVLMEAIGV. The Cytoplasmic portion of the chain corresponds to 493-522; the sequence is SWFYGVDRFSNDIQQMMGFRPGLYWRLCWK. A helical membrane pass occupies residues 523–545; sequence FVSPAFLLFVVVVSIINFKPLTY. At 546–548 the chain is on the extracellular side; the sequence is DDY. Residues 549–569 traverse the membrane as a helical segment; that stretch reads IFPPWANWVGWGIALSSMVLV. The Cytoplasmic segment spans residues 570-617; that stretch reads PIYVIYKFLSTQGSLWERLAYGITPENEHHLVAQRDIRQFQLQHWLAI.

This sequence belongs to the sodium:neurotransmitter symporter (SNF) (TC 2.A.22) family. SLC6A2 subfamily. Monomer. Can form homodimers in the cell membrane; homodimerization is mostly mediated by cholesterol and lipids, and regulates neurotransmitter transport activity. Interacts with PRKCABP. Post-translationally, palmitoylated; palmitoylation regulates protein levels and neurotransmitter transport.

It is found in the cell membrane. Its subcellular location is the cell projection. The protein localises to the axon. It localises to the synapse. The protein resides in the synaptosome. It carries out the reaction (R)-noradrenaline(out) + chloride(out) + Na(+)(out) = (R)-noradrenaline(in) + chloride(in) + Na(+)(in). The catalysed reaction is dopamine(out) + chloride(out) + Na(+)(out) = dopamine(in) + chloride(in) + Na(+)(in). It catalyses the reaction dopamine(out) + chloride(out) + 2 Na(+)(out) = dopamine(in) + chloride(in) + 2 Na(+)(in). With respect to regulation, inhibited by mazindol, desipramine, nomifensine and nortriptyline. Functionally, mediates sodium- and chloride-dependent transport of norepinephrine (also known as noradrenaline), the primary signaling neurotransmitter in the autonomic sympathetic nervous system. Is responsible for norepinephrine re-uptake and clearance from the synaptic cleft, thus playing a crucial role in norepinephrine inactivation and homeostasis. Can also mediate sodium- and chloride-dependent transport of dopamine. The polypeptide is Sodium-dependent noradrenaline transporter (Homo sapiens (Human)).